The primary structure comprises 208 residues: Large ribosomal subunit protein bL25 (208 aa).

A disordered region spans residues 184–208; sequence VTISGTSSDQDTSGGESSGTTTSED. Over residues 187–208 the composition is skewed to low complexity; it reads SGTSSDQDTSGGESSGTTTSED.

The protein belongs to the bacterial ribosomal protein bL25 family. CTC subfamily. In terms of assembly, part of the 50S ribosomal subunit; part of the 5S rRNA/L5/L18/L25 subcomplex. Contacts the 5S rRNA. Binds to the 5S rRNA independently of L5 and L18.

Functionally, this is one of the proteins that binds to the 5S RNA in the ribosome where it forms part of the central protuberance. The protein is Large ribosomal subunit protein bL25 of Ehrlichia ruminantium (strain Gardel).